The primary structure comprises 210 residues: Large ribosomal subunit protein uL4 (210 aa).

Residues 46-89 (QGTASTLTRSEVRGGGRKPYKQKGTGRARQGSIRTPLRPGGGII) are disordered. Positions 60-71 (GGRKPYKQKGTG) are enriched in basic residues.

It belongs to the universal ribosomal protein uL4 family. In terms of assembly, part of the 50S ribosomal subunit.

Functionally, one of the primary rRNA binding proteins, this protein initially binds near the 5'-end of the 23S rRNA. It is important during the early stages of 50S assembly. It makes multiple contacts with different domains of the 23S rRNA in the assembled 50S subunit and ribosome. In terms of biological role, forms part of the polypeptide exit tunnel. This chain is Large ribosomal subunit protein uL4, found in Prochlorococcus marinus (strain MIT 9312).